We begin with the raw amino-acid sequence, 400 residues long: CCA-adding enzyme (400 aa).

Residues glycine 28 and arginine 31 each contribute to the ATP site. Positions 28 and 31 each coordinate CTP. Residues aspartate 41 and aspartate 43 each contribute to the Mg(2+) site. Residues arginine 112, aspartate 155, arginine 158, arginine 161, and arginine 164 each contribute to the ATP site. Arginine 112, aspartate 155, arginine 158, arginine 161, and arginine 164 together coordinate CTP.

It belongs to the tRNA nucleotidyltransferase/poly(A) polymerase family. Bacterial CCA-adding enzyme type 3 subfamily. Homodimer. Requires Mg(2+) as cofactor.

It catalyses the reaction a tRNA precursor + 2 CTP + ATP = a tRNA with a 3' CCA end + 3 diphosphate. The enzyme catalyses a tRNA with a 3' CCA end + 2 CTP + ATP = a tRNA with a 3' CCACCA end + 3 diphosphate. Its function is as follows. Catalyzes the addition and repair of the essential 3'-terminal CCA sequence in tRNAs without using a nucleic acid template. Adds these three nucleotides in the order of C, C, and A to the tRNA nucleotide-73, using CTP and ATP as substrates and producing inorganic pyrophosphate. tRNA 3'-terminal CCA addition is required both for tRNA processing and repair. Also involved in tRNA surveillance by mediating tandem CCA addition to generate a CCACCA at the 3' terminus of unstable tRNAs. While stable tRNAs receive only 3'-terminal CCA, unstable tRNAs are marked with CCACCA and rapidly degraded. The chain is CCA-adding enzyme from Oceanobacillus iheyensis (strain DSM 14371 / CIP 107618 / JCM 11309 / KCTC 3954 / HTE831).